Consider the following 245-residue polypeptide: DNA repair protein RecO (245 aa).

This sequence belongs to the RecO family.

Functionally, involved in DNA repair and RecF pathway recombination. The sequence is that of DNA repair protein RecO from Bartonella bacilliformis (strain ATCC 35685 / KC583 / Herrer 020/F12,63).